The following is a 120-amino-acid chain: Large ribosomal subunit protein uL18 (120 aa).

A disordered region spans residues 1–26; that stretch reads MKLTRRESKQRRHRRVRGKVQGSPER. Residues 8-18 show a composition bias toward basic residues; sequence SKQRRHRRVRG.

Belongs to the universal ribosomal protein uL18 family. In terms of assembly, part of the 50S ribosomal subunit; part of the 5S rRNA/L5/L18/L25 subcomplex. Contacts the 5S and 23S rRNAs.

This is one of the proteins that bind and probably mediate the attachment of the 5S RNA into the large ribosomal subunit, where it forms part of the central protuberance. The polypeptide is Large ribosomal subunit protein uL18 (Trichormus variabilis (strain ATCC 29413 / PCC 7937) (Anabaena variabilis)).